Reading from the N-terminus, the 293-residue chain is Magnetosome protein MamB (293 aa).

The Cytoplasmic segment spans residues 1 to 12; it reads MTTAACRKCRDE. The transmembrane domain (TMD) stretch occupies residues 1-214; the sequence is MTTAACRKCR…GLMDTSVEND (214 aa). A helical transmembrane segment spans residues 13–33; it reads VIWWAFFINIGQTTYKGVLGV. At 34 to 78 the chain is on the lumenal side; sequence LSGSAALVADAMHSGADVVATLVTMFSVKVSDKKADEKYPFGYGN. A helical transmembrane segment spans residues 79 to 99; it reads IQFIASSIVGLILFFGALYLM. The Cytoplasmic portion of the chain corresponds to 100–105; it reads YESTMQ. Residues 106–126 traverse the membrane as a helical segment; the sequence is IIAGNTSSPSPFAVLGAIVSI. Residues 127–158 lie on the Lumenal side of the membrane; that stretch reads ATNELMFRYQSCVGRQNNSPAIIANAWDNRSD. A helical transmembrane segment spans residues 159–179; it reads ALSSVAVLIGIVAAVVGFPIA. Over 180-293 the chain is Cytoplasmic; sequence DRLAAIGVGI…VGVTPVRIAA (114 aa). A C-terminal domain (CTD) region spans residues 215–293; it reads VLVDAYNIAK…VGVTPVRIAA (79 aa). 3 residues coordinate Zn(2+): His245, Asp247, and His283.

Belongs to the cation diffusion facilitator (CDF) transporter (TC 2.A.4) family. As to quaternary structure, the isolated C-terminal domain (approximately 213-293) forms homodimers. Forms heterodimers with MamM.

The protein resides in the magnetosome membrane. Plays a dual, essential role in magnetosome formation; required for magnetosome vesicle formation as well as biomineralization. Probably binds and transports iron. Requires heterodimerization with MamM for stability. This chain is Magnetosome protein MamB (mamB), found in Magnetospira sp. (strain QH-2) (Marine magnetic spirillum (strain QH-2)).